The sequence spans 146 residues: Nucleoside diphosphate kinase (146 aa).

ATP is bound by residues Lys-11, Phe-59, Arg-87, Thr-93, Arg-104, and Asn-114. Catalysis depends on His-117, which acts as the Pros-phosphohistidine intermediate.

The protein belongs to the NDK family. In terms of assembly, homotetramer. It depends on Mg(2+) as a cofactor.

Its subcellular location is the cytoplasm. It carries out the reaction a 2'-deoxyribonucleoside 5'-diphosphate + ATP = a 2'-deoxyribonucleoside 5'-triphosphate + ADP. The enzyme catalyses a ribonucleoside 5'-diphosphate + ATP = a ribonucleoside 5'-triphosphate + ADP. Its function is as follows. Major role in the synthesis of nucleoside triphosphates other than ATP. The ATP gamma phosphate is transferred to the NDP beta phosphate via a ping-pong mechanism, using a phosphorylated active-site intermediate. This Anaeromyxobacter sp. (strain Fw109-5) protein is Nucleoside diphosphate kinase.